Here is a 338-residue protein sequence, read N- to C-terminus: Phenylalanine--tRNA ligase alpha subunit (338 aa).

Glutamate 252 serves as a coordination point for Mg(2+).

This sequence belongs to the class-II aminoacyl-tRNA synthetase family. Phe-tRNA synthetase alpha subunit type 1 subfamily. In terms of assembly, tetramer of two alpha and two beta subunits. Requires Mg(2+) as cofactor.

The protein localises to the cytoplasm. It catalyses the reaction tRNA(Phe) + L-phenylalanine + ATP = L-phenylalanyl-tRNA(Phe) + AMP + diphosphate + H(+). This Ectopseudomonas mendocina (strain ymp) (Pseudomonas mendocina) protein is Phenylalanine--tRNA ligase alpha subunit.